The following is a 313-amino-acid chain: Cadmium, cobalt and zinc/H(+)-K(+) antiporter (313 aa).

Residues 1–14 (MGHNHNHAGGSNKK) lie on the Extracellular side of the membrane. A helical transmembrane segment spans residues 15-35 (VLLISFIMITGYMIIEAIGGF). At 36 to 45 (LTNSLALLSD) the chain is on the cytoplasmic side. Residues 46-66 (AGHMLSDSISLMVALIAFKLA) form a helical membrane-spanning segment. At 67-80 (EKKASHHKTFGYKR) the chain is on the extracellular side. Residues 81-101 (FEILAAVINGVALILISLYII) form a helical membrane-spanning segment. Topologically, residues 102 to 117 (YEAIKRFSHPPEVATT) are cytoplasmic. The chain crosses the membrane as a helical span at residues 118-138 (GMLTISIIGLAVNILVAWIML). At 139–159 (NGGDTKNNLNIRGAYLHVISD) the chain is on the extracellular side. The helical transmembrane segment at 160–180 (MLGSIGAILAAILIIFFGWSW) threads the bilayer. Topologically, residues 181–313 (ADPAASVIVA…TENPRDHHHH (133 aa)) are cytoplasmic.

This sequence belongs to the cation diffusion facilitator (CDF) transporter (TC 2.A.4) family. SLC30A subfamily.

Its subcellular location is the cell membrane. Functionally, involved in divalent cation and potassium homeostasis in the cell. Catalyzes the active efflux of zinc, cadmium and cobalt, in exchange for potassium and H(+) ions. In Bacillus velezensis (strain DSM 23117 / BGSC 10A6 / LMG 26770 / FZB42) (Bacillus amyloliquefaciens subsp. plantarum), this protein is Cadmium, cobalt and zinc/H(+)-K(+) antiporter (czcD).